Here is a 4652-residue protein sequence, read N- to C-terminus: Low-density lipoprotein receptor-related protein 2 (4652 aa).

Residues 1–25 form the signal peptide; it reads MERWAAAAACTLLLAFAACLAPASG. At 26–4422 the chain is on the extracellular side; the sequence is RECLGNEFRC…SKGISPGTTV (4397 aa). LDL-receptor class A domains follow at residues 27–63, 66–104, 108–144, 142–181, 183–219, 223–259, and 267–308; these read ECLGNEFRCSNGHCITESWRCDGTRDCLDGSDEIGCP, TCGSTQFHCENEDVCIPLYWVCDGEEDCSNGADEHQRCP, TCSSHHFTCTNGECIPVEYRCDHSTDCLDGTDEINCR, NCRYPVCQQQTCHNGACYNTSQRCDGEIDCRDASDELNCT, RCLRNEFQCGSGECIPRDYVCDHDPDCSDSSDEHSCS, PCKGNEFACSNGFCINQNWVCDGMADCLDNSDEDGCE, and ECYP…RVCD. 21 disulfides stabilise this stretch: cysteine 28–cysteine 40, cysteine 35–cysteine 53, cysteine 47–cysteine 62, cysteine 67–cysteine 80, cysteine 74–cysteine 93, cysteine 87–cysteine 103, cysteine 109–cysteine 121, cysteine 116–cysteine 134, cysteine 128–cysteine 143, cysteine 143–cysteine 158, cysteine 153–cysteine 171, cysteine 165–cysteine 180, cysteine 184–cysteine 196, cysteine 191–cysteine 209, cysteine 203–cysteine 218, cysteine 224–cysteine 236, cysteine 231–cysteine 249, cysteine 243–cysteine 258, cysteine 268–cysteine 281, cysteine 275–cysteine 294, and cysteine 288–cysteine 307. Asparagine 160 and asparagine 179 each carry an N-linked (GlcNAc...) asparagine glycan. N-linked (GlcNAc...) asparagine glycosylation occurs at asparagine 341. Residues 348–386 form the EGF-like 1; calcium-binding domain; it reads DFNDCQIWGICDHFCEDRIGHHQCFCAEGYVLEHEQHCR. 3 cysteine pairs are disulfide-bonded: cysteine 352–cysteine 362, cysteine 358–cysteine 371, and cysteine 373–cysteine 385. N-linked (GlcNAc...) asparagine glycosylation is present at asparagine 388. LDL-receptor class B repeat units lie at residues 436–478, 479–521, 522–568, 569–613, 753–795, 796–837, 838–881, and 882–925; these read SKVF…DWIN, NKLY…DPTV, GYLF…DLVA, KRVY…FEDN, NAIF…DWIS, RNLY…HPIA, GYIF…DWGS, and SRLY…FGEY. Asparagine 771 carries an N-linked (GlcNAc...) asparagine glycan. N-linked (GlcNAc...) asparagine glycosylation occurs at asparagine 866. The N-linked (GlcNAc...) asparagine glycan is linked to asparagine 1015. The LDL-receptor class A 8 domain occupies 1025–1061; that stretch reads QCGALSFPCNNGRCVPLHYRCDGVDDCHDNSDEVQCG. 3 cysteine pairs are disulfide-bonded: cysteine 1026-cysteine 1038, cysteine 1033-cysteine 1051, and cysteine 1045-cysteine 1060. An N-linked (GlcNAc...) asparagine glycan is attached at asparagine 1064. 7 consecutive LDL-receptor class A domains span residues 1066–1104, 1110–1146, 1150–1186, 1188–1225, 1231–1269, 1272–1308, and 1313–1351; these read SCAPSAFACGHGGGECIPSYWRCDNHNDCVDGSDEQNCS, SCRADYFTCDNHMCIPKNWLCDTDNDCGDGSDEKRCD, TCSPTQFHCPNHRCIDLAFVCDGDKDCADGSDESACV, NCTDSQFKCVGSNKCISNTYRCDGVSDCSDHSDEIDCP, MCRQDEFQCREDGICIPDSWECDGHPDCLTGSDEHSGCP, TCPXSRFLCANGNCIFRDWLCDGDNDCRDMSDEKDCP, and LCPSWQWQCPGHSICVNLSSVCDGISDCPHGTDESPLCN. Cystine bridges form between cysteine 1067–cysteine 1081, cysteine 1074–cysteine 1094, cysteine 1088–cysteine 1103, cysteine 1111–cysteine 1123, cysteine 1118–cysteine 1136, cysteine 1130–cysteine 1145, cysteine 1151–cysteine 1163, cysteine 1158–cysteine 1176, and cysteine 1170–cysteine 1185. Residue asparagine 1102 is glycosylated (N-linked (GlcNAc...) asparagine). Tryptophan 1128, aspartate 1131, aspartate 1133, aspartate 1135, aspartate 1141, and glutamate 1142 together coordinate Ca(2+). Asparagine 1188 is a glycosylation site (N-linked (GlcNAc...) asparagine). 12 cysteine pairs are disulfide-bonded: cysteine 1189–cysteine 1202, cysteine 1196–cysteine 1215, cysteine 1209–cysteine 1224, cysteine 1232–cysteine 1245, cysteine 1239–cysteine 1258, cysteine 1252–cysteine 1268, cysteine 1273–cysteine 1285, cysteine 1280–cysteine 1298, cysteine 1292–cysteine 1307, cysteine 1314–cysteine 1327, cysteine 1321–cysteine 1340, and cysteine 1334–cysteine 1350. Residues tyrosine 1207, aspartate 1210, valine 1212, aspartate 1214, aspartate 1220, and glutamate 1221 each contribute to the Ca(2+) site. The N-linked (GlcNAc...) asparagine glycan is linked to asparagine 1329. N-linked (GlcNAc...) asparagine glycosylation is found at asparagine 1385, asparagine 1452, asparagine 1498, and asparagine 1552. LDL-receptor class B repeat units lie at residues 1480–1522, 1523–1565, 1568–1611, 1612–1654, 1655–1696, 1789–1831, 1832–1881, 1882–1929, 1930–1971, and 1972–2012; these read GRIF…DWVG, RNLY…DPRV, RVIF…DYPT, RLLY…TIFE, DSIY…VHPA, QFLY…DWLS, RNLY…DPAK, GKLY…DIQE, QKLY…YGPY, and LYYA…YRRR. Asparagine 1677 and asparagine 1809 each carry an N-linked (GlcNAc...) asparagine glycan. A glycan (N-linked (GlcNAc...) asparagine) is linked at asparagine 2053. LDL-receptor class B repeat units lie at residues 2105-2154, 2155-2199, 2200-2243, 2244-2287, 2429-2475, 2476-2516, 2517-2560, 2561-2602, and 2603-2644; these read GFVY…DWVA, GNLY…DPKN, RYLF…DHNS, GYIY…FGNS, NRIY…DWIG, RRIY…DPCQ, GYMY…DYKE, NLLY…YGQY, and IYWT…VVNN. Asparagine 2175 and asparagine 2222 each carry an N-linked (GlcNAc...) asparagine glycan. Asparagine 2485 carries an N-linked (GlcNAc...) asparagine glycan. 10 consecutive LDL-receptor class A domains span residues 2696 to 2734, 2737 to 2773, 2776 to 2815, 2818 to 2857, 2860 to 2897, 2902 to 2941, 2944 to 2986, 2989 to 3025, 3028 to 3066, and 3071 to 3107; these read RCNSTQFTCLSGYCILESLKCNDIDECGDSSDELETLCA, TCPPTSFTCANGRCIQRHFRCDHYNDCGDNSDESGCR, SCNITTEFSCNNGKCLPLQLVCDGIDHCNDNNTSDEKNCA, TCLPDYIKCANSNVCIPRLFLCDGDNDCGDMSDENPIYCV, TCKNNEFQCTSGSCIPELWHCDGERDCDDGSDEPATCV, TCSSDEFKCDNNRCIQMEWICDGDNDCGDMSDEDGRHHCE, NCSS…QNCT, NCSGTEFRCSNGLCIPNWFRCDRRNDCGDYSDERNCK, ACDENLFTCQNGICTYKSYICDGENDCGDNSDELEHLCH, and TCPPHQFRCNNGNCIEMVKVCNHQADCSDNSDEERCG. Cystine bridges form between cysteine 2697–cysteine 2709, cysteine 2704–cysteine 2722, cysteine 2716–cysteine 2733, cysteine 2738–cysteine 2750, cysteine 2745–cysteine 2763, cysteine 2757–cysteine 2772, cysteine 2777–cysteine 2790, cysteine 2785–cysteine 2803, cysteine 2797–cysteine 2814, cysteine 2819–cysteine 2832, cysteine 2826–cysteine 2845, cysteine 2839–cysteine 2856, cysteine 2861–cysteine 2873, cysteine 2868–cysteine 2886, cysteine 2880–cysteine 2896, cysteine 2903–cysteine 2915, cysteine 2910–cysteine 2928, and cysteine 2922–cysteine 2940. An N-linked (GlcNAc...) asparagine glycan is attached at asparagine 2698. An N-linked (GlcNAc...) asparagine glycan is attached at asparagine 2778. N-linked (GlcNAc...) asparagine glycans are attached at residues asparagine 2806 and asparagine 2807. N-linked (GlcNAc...) asparagine glycosylation is present at asparagine 2944. 3 cysteine pairs are disulfide-bonded: cysteine 2945–cysteine 2962, cysteine 2952–cysteine 2975, and cysteine 2969–cysteine 2985. Residues asparagine 2984 and asparagine 2989 are each glycosylated (N-linked (GlcNAc...) asparagine). Disulfide bonds link cysteine 2990-cysteine 3002, cysteine 2997-cysteine 3015, cysteine 3009-cysteine 3024, cysteine 3029-cysteine 3041, cysteine 3036-cysteine 3054, cysteine 3048-cysteine 3065, cysteine 3072-cysteine 3084, cysteine 3079-cysteine 3097, and cysteine 3091-cysteine 3106. Asparagine 3122 carries N-linked (GlcNAc...) asparagine glycosylation. In terms of domain architecture, EGF-like 2; calcium-binding spans 3149-3189; the sequence is DIDECKETPSVCSQKCENLLGSYICKCAPGYTREPDGRSCR. 3 cysteine pairs are disulfide-bonded: cysteine 3153–cysteine 3164, cysteine 3160–cysteine 3173, and cysteine 3175–cysteine 3188. Asparagine 3208, asparagine 3254, asparagine 3312, and asparagine 3352 each carry an N-linked (GlcNAc...) asparagine glycan. LDL-receptor class B repeat units follow at residues 3236–3278, 3279–3321, 3330–3373, 3374–3417, and 3418–3458; these read ERLY…DWVT, RKLY…DKPR, GYVY…DYTN, DLLY…FEDT, and IYWT…YHPY. N-linked (GlcNAc...) asparagine glycans are attached at residues asparagine 3435 and asparagine 3444. 9 consecutive LDL-receptor class A domains span residues 3509-3547, 3550-3588, 3591-3629, 3632-3670, 3675-3713, 3716-3753, 3756-3792, 3795-3831, and 3839-3877; these read MCSSTQFLCANNEMCIPIWWKCDGQKDCLDGSDEPNTCP, FCRLGQFQCSDGNCTSSNFICNARQDCPDGSDEDAVLCE, RCESNQWQCANKRCIPESWQCDSLNDCGDNSDEDSSHCA, TCLPGYFKCANGHCIPQSWKCDVDNDCGDYSDEPLQECM, RCDNYTEFDCKTNYRCIPKWAVCNGFDDCRDNSDEQNCE, TCKPSGEFRCTNHHCIPLRWRCDGHNDCGDNSDEENCV, QCSESEFRCDDQTCIPSRWICDQNNDCGDNSDERDCE, TCHPGYFQCSSGHCIPDQMRCDGFADCLDASDEATCP, and YCPATLFECKNHVCVQPSWKCDGDNDCGDGSDEELHLCL. Disulfide bonds link cysteine 3510–cysteine 3523, cysteine 3517–cysteine 3536, cysteine 3530–cysteine 3546, cysteine 3551–cysteine 3563, cysteine 3558–cysteine 3576, cysteine 3570–cysteine 3587, cysteine 3592–cysteine 3604, cysteine 3599–cysteine 3617, cysteine 3611–cysteine 3628, cysteine 3633–cysteine 3645, cysteine 3640–cysteine 3658, cysteine 3652–cysteine 3669, cysteine 3676–cysteine 3690, cysteine 3684–cysteine 3703, cysteine 3697–cysteine 3712, cysteine 3717–cysteine 3730, cysteine 3725–cysteine 3743, cysteine 3737–cysteine 3752, cysteine 3757–cysteine 3769, cysteine 3764–cysteine 3782, cysteine 3776–cysteine 3791, cysteine 3796–cysteine 3808, cysteine 3803–cysteine 3821, cysteine 3815–cysteine 3830, cysteine 3840–cysteine 3852, cysteine 3847–cysteine 3865, and cysteine 3859–cysteine 3876. N-linked (GlcNAc...) asparagine glycosylation occurs at asparagine 3562. Asparagine 3678 carries an N-linked (GlcNAc...) asparagine glycan. A glycan (N-linked (GlcNAc...) asparagine) is linked at asparagine 3878. LDL-receptor class A domains are found at residues 3880–3919 and 3925–3961; these read TCDLTNRFRCDNNRCIYRHELCNHEDDCGDGSDEKKENCL and PCTEGEFKCSNGHCISQHLVCDDVDDCGDHFDETGCN. Cystine bridges form between cysteine 3881/cysteine 3894, cysteine 3889/cysteine 3907, cysteine 3901/cysteine 3918, cysteine 3926/cysteine 3938, cysteine 3933/cysteine 3951, cysteine 3945/cysteine 3960, cysteine 3968/cysteine 3977, cysteine 3973/cysteine 3987, cysteine 3989/cysteine 4003, cysteine 4009/cysteine 4019, cysteine 4015/cysteine 4028, and cysteine 4030/cysteine 4045. The EGF-like 3 domain occupies 3964–4004; it reads EERSCAENLCEHNCTQLIGGGFICSCRPGFKASSLNRNSCE. N-linked (GlcNAc...) asparagine glycosylation is present at asparagine 3976. The 42-residue stretch at 4005–4046 folds into the EGF-like 4; calcium-binding domain; that stretch reads DINECEQFGVCPQNCHNTKGSYECTCAEGFRSMSEHYGERCA. An N-linked (GlcNAc...) asparagine glycan is attached at asparagine 4066. LDL-receptor class B repeat units lie at residues 4152-4194, 4195-4238, and 4240-4281; these read RHIY…NPKQ, GLMY…DYVN, and DRIY…FESQ. Asparagine 4325 is a glycosylation site (N-linked (GlcNAc...) asparagine). One can recognise an EGF-like 5 domain in the interval 4375–4409; the sequence is MPPPCRCMNEGNCYFDKNNLPKCKCPSGYMGEYCE. 3 disulfides stabilise this stretch: cysteine 4379–cysteine 4387, cysteine 4381–cysteine 4397, and cysteine 4399–cysteine 4408. A helical transmembrane segment spans residues 4423-4443; it reads AVLVTLILIIIIGGLVALGFF. Residues 4444–4652 are Cytoplasmic-facing; the sequence is HYRKTGSILI…ANLVREDSEA (209 aa). The short motif at 4450–4459 is the SH3-binding element; sequence SILISMPRLP. The PxLPxI/L motif 1; mediates interaction with ANKRA2 signature appears at 4453–4458; it reads ISMPRL. Residues 4456 to 4461 carry the PxLPxI/L motif 2; mediates interaction with ANKRA2 motif; it reads PRLPSL. Serine 4460 bears the Phosphoserine mark. Residues 4518–4523 carry the Endocytosis signal motif; that stretch reads FENPMY. The span at 4536–4553 shows a compositional bias: polar residues; it reads TTTQVSESGNVYNKNYGS. The disordered stretch occupies residues 4536–4652; the sequence is TTTQVSESGN…ANLVREDSEA (117 aa). Serine 4568 carries the phosphoserine modification. An interaction with DAB2 region spans residues 4588 to 4601; the sequence is QNTNFENPIYAETE. The NPXY motif motif lies at 4594–4597; the sequence is NPIY. The short motif at 4597–4600 is the SH2-binding element; sequence YAET. The SH3-binding motif lies at 4610–4621; sequence VTPPPSPSPPAK. Serine 4615 carries the post-translational modification Phosphoserine. Residues 4626–4636 are compositionally biased toward polar residues; it reads KGTTPAYSATE. Threonine 4629 is subject to Phosphothreonine. Residue serine 4650 is modified to Phosphoserine.

Belongs to the LDLR family. Binds plasminogen, extracellular matrix components, plasminogen activator-plasminogen activator inhibitor type I complex, apolipoprotein E-enriched beta-VLDL, lipoprotein lipase, lactoferrin, CLU/clusterin and calcium. Forms a multimeric complex together with LRPAP1. Interacts (via PxLPxI/L motif) with ANKRA2 (via ankyrin repeats). Interacts with LRP2BP. Interacts (via NPXY motif) with DAB2; the interaction is not affected by tyrosine phosphorylation of the NPXY motif. Interacts with MB. Interacts with BMP4. Interacts with the Sonic hedgehog protein N-product which is the active product of SHH. Interacts with CST3 in a calcium-dependent manner. Interacts with the vitamin-D binding protein GC/DBP. Interacts with sex hormone-binding protein SHBG. Interacts with angiotensin-2. Also interacts with angiotensin 1-7. Interacts with APOM. Interacts with selenoprotein SEPP1. Interacts with LEP. Interacts with ALB. Interacts with the antiapoptotic protein BIRC5/survivin. Interacts with matrix metalloproteinase MMP2 in complex with metalloproteinase inhibitor TIMP1. In neurons, forms a trimeric complex with APP and APPB1/FE65. Interacts with LDLRAP1/ARH; mediates trafficking of LRP2 to the endocytic recycling compartment. Does not interact with beta-amyloid protein 40 alone but interacts with the complex composed of beta-amyloid protein 40 and CLU/APOJ. Interacts with MDK. In terms of processing, a fraction undergoes proteolytic cleavage of the extracellular domain at the cell membrane to generate a cytoplasmic tail fragment. This is internalized into the early endosome from where it trafficks in an LDLRAP1/ARH-dependent manner to the endocytic recycling compartment (ERC). In the ERC, it is further cleaved by gamma-secretase to release a fragment which translocates to the nucleus and mediates transcriptional repression. N-glycosylation is required for ligand binding.

It is found in the apical cell membrane. The protein resides in the endosome lumen. It localises to the membrane. Its subcellular location is the clathrin-coated pit. The protein localises to the cell projection. It is found in the dendrite. The protein resides in the axon. Functionally, multiligand endocytic receptor. Acts together with CUBN to mediate endocytosis of high-density lipoproteins. Mediates receptor-mediated uptake of polybasic drugs such as aprotinin, aminoglycosides and polymyxin B. In the kidney, mediates the tubular uptake and clearance of leptin. Also mediates transport of leptin across the blood-brain barrier through endocytosis at the choroid plexus epithelium. Endocytosis of leptin in neuronal cells is required for hypothalamic leptin signaling and leptin-mediated regulation of feeding and body weight. Mediates endocytosis and subsequent lysosomal degradation of CST3 in kidney proximal tubule cells. Mediates renal uptake of 25-hydroxyvitamin D3 in complex with the vitamin D3 transporter GC/DBP. Mediates renal uptake of metallothionein-bound heavy metals. Together with CUBN, mediates renal reabsorption of myoglobin. Mediates renal uptake and subsequent lysosomal degradation of APOM. Plays a role in kidney selenium homeostasis by mediating renal endocytosis of selenoprotein SEPP1. Mediates renal uptake of the antiapoptotic protein BIRC5/survivin which may be important for functional integrity of the kidney. Mediates renal uptake of matrix metalloproteinase MMP2 in complex with metalloproteinase inhibitor TIMP1. Mediates endocytosis of Sonic hedgehog protein N-product (ShhN), the active product of SHH. Also mediates ShhN transcytosis. In the embryonic neuroepithelium, mediates endocytic uptake and degradation of BMP4, is required for correct SHH localization in the ventral neural tube and plays a role in patterning of the ventral telencephalon. Required at the onset of neurulation to sequester SHH on the apical surface of neuroepithelial cells of the rostral diencephalon ventral midline and to control PTCH1-dependent uptake and intracellular trafficking of SHH. During neurulation, required in neuroepithelial cells for uptake of folate bound to the folate receptor FOLR1 which is necessary for neural tube closure. In the adult brain, negatively regulates BMP signaling in the subependymal zone which enables neurogenesis to proceed. In astrocytes, mediates endocytosis of ALB which is required for the synthesis of the neurotrophic factor oleic acid. Involved in neurite branching. During optic nerve development, required for SHH-mediated migration and proliferation of oligodendrocyte precursor cells. Mediates endocytic uptake and clearance of SHH in the retinal margin which protects retinal progenitor cells from mitogenic stimuli and keeps them quiescent. Plays a role in reproductive organ development by mediating uptake in reproductive tissues of androgen and estrogen bound to the sex hormone binding protein SHBG. Mediates endocytosis of angiotensin-2. Also mediates endocytosis of angiotensis 1-7. Binds to the complex composed of beta-amyloid protein 40 and CLU/APOJ and mediates its endocytosis and lysosomal degradation. Required for embryonic heart development. Required for normal hearing, possibly through interaction with estrogen in the inner ear. In Sus scrofa (Pig), this protein is Low-density lipoprotein receptor-related protein 2.